A 379-amino-acid polypeptide reads, in one-letter code: MNGFNVRNENNFNSWKIKIQSAPRFESVFDLATDRQRCTPDEVKNNSLWSKYMFPKPFAPTTLKSYKSRFIKIVYCSVDDVHLEDMSYSLDKEFDSIENQTLLIDPQELCRRMLELRSVTKETLQLTINFYTNMMNLPEYKIPRMVMLPRDKELKNIREKEKNLMLKNVIDTILNFINDKIKMLNSDYVHDRGLIRGAIVFCIMLGTGMRINEARQLSVDDLNVLIKRGKLHSDTINLKRKRSRNNTLNNIKMKPLELAREIYSRNPTILQISKNTSTPFKDFRRLLEESGVEMERPRSNMIRHYLSSNLYNSGVPLQKVAKLMNHESSASTKHYLNKYNIGLDETSSEEENNNDDDDAQHNRNSSGSSGESLLYYRNE.

Residues 169–348 (VIDTILNFIN…YNIGLDETSS (180 aa)) enclose the Tyr recombinase domain. Residues R210, K239, R303, and H326 contribute to the active site. The active-site O-(3'-phospho-DNA)-tyrosine intermediate is Y335. Acidic residues predominate over residues 346–358 (TSSEEENNNDDDD). The disordered stretch occupies residues 346-379 (TSSEEENNNDDDDAQHNRNSSGSSGESLLYYRNE). The span at 362–379 (NRNSSGSSGESLLYYRNE) shows a compositional bias: low complexity.

The protein belongs to the 'phage' integrase family.

In terms of biological role, plays a role in nucleocapsid assembly and serves an essential function during the final stages of the DNA packaging process. Participates in the processing of branched DNA molecules at the late stages of viral genome replication. The chain is Very late expression factor 1 (VLF-1) from Lepidoptera (butterflies and moths).